The sequence spans 234 residues: 2,3,4,5-tetrahydropyridine-2,6-dicarboxylate N-acetyltransferase (234 aa).

The protein belongs to the transferase hexapeptide repeat family. DapH subfamily.

The catalysed reaction is (S)-2,3,4,5-tetrahydrodipicolinate + acetyl-CoA + H2O = L-2-acetamido-6-oxoheptanedioate + CoA. The protein operates within amino-acid biosynthesis; L-lysine biosynthesis via DAP pathway; LL-2,6-diaminopimelate from (S)-tetrahydrodipicolinate (acetylase route): step 1/3. Its function is as follows. Catalyzes the transfer of an acetyl group from acetyl-CoA to tetrahydrodipicolinate. This chain is 2,3,4,5-tetrahydropyridine-2,6-dicarboxylate N-acetyltransferase, found in Lacticaseibacillus casei (strain BL23) (Lactobacillus casei).